Reading from the N-terminus, the 215-residue chain is Probable GTP-binding protein EngB (215 aa).

The EngB-type G domain occupies 31–215; the sequence is GPPEIAFAGR…RAAILQAIAV (185 aa). GTP-binding positions include 39 to 46, 66 to 70, 93 to 96, 160 to 163, and 194 to 196; these read GRSNVGKS, GRTQE, DMPG, TKSD, and TSS. Mg(2+)-binding residues include S46 and T68.

Belongs to the TRAFAC class TrmE-Era-EngA-EngB-Septin-like GTPase superfamily. EngB GTPase family. Mg(2+) is required as a cofactor.

Functionally, necessary for normal cell division and for the maintenance of normal septation. In Bartonella quintana (strain Toulouse) (Rochalimaea quintana), this protein is Probable GTP-binding protein EngB.